Consider the following 245-residue polypeptide: MKMKQISDTTLKITISLEDLMDRGMEIADFLVPQEKTEEFFYAILDELEMPDSFLDTGMLSFRVTPKPDKVDVFVTKSKIDQNLDFEDLSDLPDMEELAQMSPDEFIKTLEKSIADKTKDDIEAIQSLEQVEAKEEEQEQAEQEAESKKEPYIYYILSFAKLADLVAFAKTVTFEMETSELYKMNERYYLTILVDIENHPSPYPAWLLARMREFADDSDISRSVLQEYGQVLMSHDAVLNLQKIG.

Belongs to the MecA family. In terms of assembly, homodimer.

Its function is as follows. Enables the recognition and targeting of unfolded and aggregated proteins to the ClpC protease or to other proteins involved in proteolysis. This is Adapter protein MecA from Streptococcus pneumoniae (strain ATCC BAA-255 / R6).